Consider the following 630-residue polypeptide: WD repeat-containing protein 26 homolog (630 aa).

A compositionally biased stretch (low complexity) spans 1-13 (MQSTSSTSSGSCS). Positions 1–90 (MQSTSSTSSG…NNRENTSCSG (90 aa)) are disordered. Phosphoserine is present on residues Ser-36 and Ser-40. Polar residues-rich tracts occupy residues 48–57 (PSGSSAATNG) and 66–75 (IVNNNGSSSR). The region spanning 96–128 (SNQEIIRLIGQYLHDVGLDKSVQTLMLESGCYL) is the LisH domain. The region spanning 129–190 (EHPSATKFRE…EHLDDGNPLD (62 aa)) is the CTLH domain. WD repeat units lie at residues 312–351 (DHCD…LTLK), 359–400 (QAQL…LVVK), 404–443 (SLED…VDSW), 445–482 (GVRV…SDFD), 485–524 (REPH…LVRR), 529–569 (RQSN…PLAK), and 572–612 (GHTK…SSAT). A disordered region spans residues 604 to 630 (PKPNGSSATTESDDCSSSSSSSSWNMT). Over residues 609–630 (SSATTESDDCSSSSSSSSWNMT) the composition is skewed to low complexity.

The protein resides in the cytoplasm. Its subcellular location is the mitochondrion. In terms of biological role, G-beta-like protein involved in cell signal transduction. This chain is WD repeat-containing protein 26 homolog, found in Drosophila melanogaster (Fruit fly).